The chain runs to 1193 residues: Probable cation-transporting ATPase 13A4 (1193 aa).

At 1-32 (MGDHLEKSQHALLNEGDENEMEIFGYRTQGCR) the chain is on the cytoplasmic side. An intramembrane segment occupies 33-53 (KALCLIGSIFSLGMLPLVFYW). Topologically, residues 54-198 (RPAWRVWANC…DVEITPIWKL (145 aa)) are cytoplasmic. Residues 199-219 (LIKEVLNPFYIFQLFSVCLWF) traverse the membrane as a helical segment. Topologically, residues 220–224 (SEDYK) are lumenal. The helical transmembrane segment at 225–245 (EYALAIILMSVISIALTVYDL) threads the bilayer. The Cytoplasmic segment spans residues 246 to 401 (RQQSVKLHHL…NFKLYRDAIR (156 aa)). Residues 402–422 (FLLCLVGTATIGMVYTLCVYV) traverse the membrane as a helical segment. Topologically, residues 423-437 (LSGEPPEEVVRKALD) are lumenal. The helical transmembrane segment at 438–458 (VITIAVPPALPAALTTGIIYA) threads the bilayer. Residues 459–901 (QRRLKKKGIF…KEGRAALVTS (443 aa)) lie on the Cytoplasmic side of the membrane. D487 serves as the catalytic 4-aspartylphosphate intermediate. The Mg(2+) site is built by D849 and D853. A helical transmembrane segment spans residues 902-922 (FCMFKYMALYSMIQYVGVLLL). At 923–933 (YWKTNSLSNYQ) the chain is on the lumenal side. Residues 934 to 954 (FLFQDLAITTLIGVTMNLNGA) form a helical membrane-spanning segment. The Cytoplasmic portion of the chain corresponds to 955-973 (NPKLVPFRPAGRLISPPLL). A helical membrane pass occupies residues 974–994 (LSVVLNILLSLAMHIVGFILV). Residues 995 to 1036 (QKQPWYIMDYHSVCPVRNESASALAASPSVPEKTRSNSTFAS) lie on the Lumenal side of the membrane. Residues 1037-1057 (FENTTIWFLGTINCIFVALVF) traverse the membrane as a helical segment. Over 1058–1071 (SKGKPFRQPTYTNY) the chain is Cytoplasmic. A helical transmembrane segment spans residues 1072 to 1092 (IFVLVLILQMGVCLFILFADI). The Lumenal segment spans residues 1093-1105 (PEMHRRLDLLCTP). A helical transmembrane segment spans residues 1106–1126 (VLWRVYILIMISSNFVVSLAV). The Cytoplasmic segment spans residues 1127–1193 (EKAIIENRAL…PVFESNEEQL (67 aa)).

It belongs to the cation transport ATPase (P-type) (TC 3.A.3) family. Type V subfamily. As to expression, expressed in brain and stomach.

It localises to the early endosome membrane. It is found in the late endosome membrane. The protein resides in the recycling endosome membrane. It carries out the reaction ATP + H2O = ADP + phosphate + H(+). The sequence is that of Probable cation-transporting ATPase 13A4 (Atp13a4) from Mus musculus (Mouse).